A 248-amino-acid chain; its full sequence is UDP-2,3-diacylglucosamine hydrolase (248 aa).

Residues D7, H9, D40, N78, and H113 each contribute to the Mn(2+) site. N78–R79 provides a ligand contact to substrate. Residues D121, S159, T163, K166, and H194 each contribute to the substrate site. The Mn(2+) site is built by H194 and H196.

This sequence belongs to the LpxH family. Requires Mn(2+) as cofactor.

It is found in the cell inner membrane. The enzyme catalyses UDP-2-N,3-O-bis[(3R)-3-hydroxytetradecanoyl]-alpha-D-glucosamine + H2O = 2-N,3-O-bis[(3R)-3-hydroxytetradecanoyl]-alpha-D-glucosaminyl 1-phosphate + UMP + 2 H(+). The protein operates within glycolipid biosynthesis; lipid IV(A) biosynthesis; lipid IV(A) from (3R)-3-hydroxytetradecanoyl-[acyl-carrier-protein] and UDP-N-acetyl-alpha-D-glucosamine: step 4/6. Hydrolyzes the pyrophosphate bond of UDP-2,3-diacylglucosamine to yield 2,3-diacylglucosamine 1-phosphate (lipid X) and UMP by catalyzing the attack of water at the alpha-P atom. Involved in the biosynthesis of lipid A, a phosphorylated glycolipid that anchors the lipopolysaccharide to the outer membrane of the cell. This Pseudomonas syringae pv. syringae (strain B728a) protein is UDP-2,3-diacylglucosamine hydrolase.